Reading from the N-terminus, the 299-residue chain is Nucleotide-binding protein glr4163 (299 aa).

An ATP-binding site is contributed by 18-25 (SPAGAGRT).

This sequence belongs to the RapZ-like family.

Displays ATPase and GTPase activities. The protein is Nucleotide-binding protein glr4163 of Gloeobacter violaceus (strain ATCC 29082 / PCC 7421).